Here is a 313-residue protein sequence, read N- to C-terminus: Flagellin (313 aa).

Coiled-coil stretches lie at residues 5-33 (INTN…ERLS) and 97-117 (VQSE…KEVT). 4 consecutive repeat copies span residues 179 to 197 (KEAV…VPAD), 199 to 217 (KNGV…VKAQ), 255 to 259 (VNNLN), and 262 to 266 (VNNLS). The 2 X 19 AA approximate tandem repeats stretch occupies residues 179 to 217 (KEAVAAKPAVPAQPAVPADPKNGVAAKPAVPAQPEVKAQ). Residues 190–199 (AQPAVPADPK) show a composition bias toward low complexity. The segment at 190–211 (AQPAVPADPKNGVAAKPAVPAQ) is disordered. Residues 252–298 (ESTVNNLNNTVNNLSAARSRIEDADYAVEVSNMSRGQILQQAGTSVL) are a coiled coil. Residues 255-266 (VNNLNNTVNNLS) form a 2 X 5 AA approximate repeats of V-N-N-L-N region.

It belongs to the bacterial flagellin family.

The protein resides in the secreted. It is found in the bacterial flagellum. Its function is as follows. Flagellin is the subunit protein which polymerizes to form the filaments of bacterial flagella. This is Flagellin (fliC) from Xenorhabdus nematophila (Achromobacter nematophilus).